A 406-amino-acid chain; its full sequence is Protein transport protein HofC homolog (406 aa).

The next 3 helical transmembrane spans lie at 167-187 (MVLG…VPQF), 214-234 (QNIG…YFYL), and 379-399 (MMVI…LPIF).

It belongs to the GSP F family.

It localises to the cell inner membrane. This Haemophilus influenzae (strain ATCC 51907 / DSM 11121 / KW20 / Rd) protein is Protein transport protein HofC homolog (hofC).